The following is a 504-amino-acid chain: Histidine--tRNA ligase (504 aa).

This sequence belongs to the class-II aminoacyl-tRNA synthetase family. In terms of assembly, homodimer.

Its subcellular location is the cytoplasm. It carries out the reaction tRNA(His) + L-histidine + ATP = L-histidyl-tRNA(His) + AMP + diphosphate + H(+). In Rhizobium meliloti (strain 1021) (Ensifer meliloti), this protein is Histidine--tRNA ligase (hisS).